The following is a 256-amino-acid chain: uncharacterized protein (256 aa).

NADP(+) contacts are provided by I18, S37, K46, D66, Y164, K168, V197, and T199. Catalysis depends on Y164, which acts as the Proton donor. The active-site Lowers pKa of active site Tyr is the K168.

This sequence belongs to the short-chain dehydrogenases/reductases (SDR) family.

Its subcellular location is the cytoplasm. This is an uncharacterized protein from Saccharomyces cerevisiae (strain ATCC 204508 / S288c) (Baker's yeast).